The chain runs to 474 residues: Eukaryotic translation initiation factor 3 subunit L (474 aa).

One can recognise a PCI domain in the interval 255–449 (DAIRMFSHIL…DLDYALQGDL (195 aa)).

Belongs to the eIF-3 subunit L family. Component of the eukaryotic translation initiation factor 3 (eIF-3) complex.

The protein localises to the cytoplasm. Functionally, component of the eukaryotic translation initiation factor 3 (eIF-3) complex, which is involved in protein synthesis of a specialized repertoire of mRNAs and, together with other initiation factors, stimulates binding of mRNA and methionyl-tRNAi to the 40S ribosome. The eIF-3 complex specifically targets and initiates translation of a subset of mRNAs involved in cell proliferation. The polypeptide is Eukaryotic translation initiation factor 3 subunit L (Chaetomium globosum (strain ATCC 6205 / CBS 148.51 / DSM 1962 / NBRC 6347 / NRRL 1970) (Soil fungus)).